The sequence spans 611 residues: Rop guanine nucleotide exchange factor 5 (611 aa).

Residues 1 to 62 are disordered; that stretch reads MENLVKSCAG…PPPPPSQILG (62 aa). The segment covering 34 to 51 has biased composition (low complexity); the sequence is STSGASYESSSTTTVASS. The PRONE domain occupies 93–477; the sequence is FKAKEMNSAD…DLTKQSDDNN (385 aa). Disordered stretches follow at residues 513–541 and 588–611; these read TTPG…TNKI and DVEE…YTVS. Residues 525–541 are compositionally biased toward basic and acidic residues; it reads KKGERRTPYSSKDTNKI.

Its function is as follows. Guanine-nucleotide exchange factor (GEF) that acts as an activator of Rop (Rho of plants) GTPases by promoting the exchange of GDP for GTP. The chain is Rop guanine nucleotide exchange factor 5 (ROPGEF5) from Arabidopsis thaliana (Mouse-ear cress).